The following is a 98-amino-acid chain: HssA/B-like protein 34 (98 aa).

Disordered regions lie at residues 1–26 and 60–98; these read MTLFSSISSMSSSMTSSRSSIASFGS and AKSSGGSCGGKGGSHNHGHGHGHGPHGHGGKGSGGSCSC. Positions 60–72 are enriched in gly residues; sequence AKSSGGSCGGKGG. The span at 73–88 shows a compositional bias: basic residues; that stretch reads SHNHGHGHGHGPHGHG. The segment covering 89 to 98 has biased composition (gly residues); sequence GKGSGGSCSC.

It belongs to the hssA/B family.

The chain is HssA/B-like protein 34 (hssl34) from Dictyostelium discoideum (Social amoeba).